The primary structure comprises 242 residues: MARLTYLGHAAFQLEAGGRKILVDPWLSNPKSPVKPEEVEGVDLIVITHSHFDHLGDVGKIAAKNPGAKVLAVYEVADLAAEEIAKETGASKDELFNAGRVIGANIGGPVVLQDLGLKVAFTPATHSSVGVAAGAVIITGEGRVYHAGDTGVTMDMRLVGEIYKPHVALLPIGGHFTMDPVEAAKAVELIRPLVAIPMHYGTFPVLYGDPEEFKKRVEEKCLPTQVRILKPGESYEFDFSKA.

Belongs to the UPF0173 family.

The chain is UPF0173 metal-dependent hydrolase APE_1117 from Aeropyrum pernix (strain ATCC 700893 / DSM 11879 / JCM 9820 / NBRC 100138 / K1).